The chain runs to 394 residues: Elongation factor Tu 2 (394 aa).

Residues 9 to 204 (KPHCNIGTIG…SIDDYIPQPT (196 aa)) form the tr-type G domain. Residues 18 to 25 (GHVDHGKT) form a G1 region. Position 18 to 25 (18 to 25 (GHVDHGKT)) interacts with GTP. Thr-25 is a binding site for Mg(2+). Positions 61–65 (GITIQ) are G2. The interval 82–85 (DCPG) is G3. Residues 82 to 86 (DCPGH) and 137 to 140 (NKID) each bind GTP. Residues 137 to 140 (NKID) form a G4 region. Residues 174–176 (SAL) are G5.

It belongs to the TRAFAC class translation factor GTPase superfamily. Classic translation factor GTPase family. EF-Tu/EF-1A subfamily. Monomer.

It is found in the cytoplasm. The catalysed reaction is GTP + H2O = GDP + phosphate + H(+). Functionally, GTP hydrolase that promotes the GTP-dependent binding of aminoacyl-tRNA to the A-site of ribosomes during protein biosynthesis. This is Elongation factor Tu 2 from Orientia tsutsugamushi (strain Boryong) (Rickettsia tsutsugamushi).